The sequence spans 841 residues: Taste receptor type 1 member 1 (841 aa).

The first 20 residues, 1–20 (MLLCTARLVGLQLLISCCWA), serve as a signal peptide directing secretion. Residues 21–567 (FACHSTESSP…VFLALREHTS (547 aa)) are Extracellular-facing. 6 N-linked (GlcNAc...) asparagine glycosylation sites follow: asparagine 87, asparagine 88, asparagine 95, asparagine 291, asparagine 479, and asparagine 529. A helical transmembrane segment spans residues 568–588 (WVLLAANTLLLLLLLGTAGLF). Residues 589–603 (AWHLDTPVVRSAGGR) are Cytoplasmic-facing. The chain crosses the membrane as a helical span at residues 604–624 (LCFLMLGSLAAGSGSLYGFFG). Topologically, residues 625 to 639 (EPTRPACLLRQALFA) are extracellular. The helical transmembrane segment at 640 to 660 (LGFTIFLSCLTVRSFQLIIIF) threads the bilayer. Residues 661 to 680 (KFSTKVPTFYHAWVQNHGAG) lie on the Cytoplasmic side of the membrane. A helical membrane pass occupies residues 681 to 701 (LFVMISSAAQLLICLTWLVVW). The Extracellular segment spans residues 702–725 (TPLPAREYQRFPHLVMLECTETNS). A helical membrane pass occupies residues 726–746 (LGFILAFLYNGLLSISAFACS). Residues 747-761 (YLGKDLPENYNEAKC) lie on the Cytoplasmic side of the membrane. A helical membrane pass occupies residues 762-782 (VTFSLLFNFVSWIAFFTTASV). Residues 783-795 (YDGKYLPAANMMA) are Extracellular-facing. A helical membrane pass occupies residues 796–816 (GLSSLSSGFGGYFLPKCYVIL). Over 817-841 (CRPDLNSTEHFQASIQDYTRRCGST) the chain is Cytoplasmic.

The protein belongs to the G-protein coupled receptor 3 family. TAS1R subfamily. In terms of assembly, forms heterodimers with TAS1R3.

The protein resides in the cell membrane. In terms of biological role, putative taste receptor. TAS1R1/TAS1R3 responds to the umami taste stimulus (the taste of monosodium glutamate). Sequence differences within and between species can significantly influence the selectivity and specificity of taste responses. The protein is Taste receptor type 1 member 1 (TAS1R1) of Homo sapiens (Human).